We begin with the raw amino-acid sequence, 298 residues long: GTPase Era (298 aa).

The 169-residue stretch at 8–176 (RSGSVAVIGR…VSDLLKLVPE (169 aa)) folds into the Era-type G domain. A G1 region spans residues 16–23 (GRPNVGKS). 16 to 23 (GRPNVGKS) is a binding site for GTP. Positions 42–46 (QTTRH) are G2. The tract at residues 63 to 66 (DTPG) is G3. GTP contacts are provided by residues 63–67 (DTPGL) and 125–128 (NKVD). Residues 125–128 (NKVD) are G4. Residues 155–157 (VSA) form a G5 region. The KH type-2 domain occupies 199-283 (VREQLMRQLG…FLETWVRVRE (85 aa)).

The protein belongs to the TRAFAC class TrmE-Era-EngA-EngB-Septin-like GTPase superfamily. Era GTPase family. In terms of assembly, monomer.

Its subcellular location is the cytoplasm. It localises to the cell inner membrane. Its function is as follows. An essential GTPase that binds both GDP and GTP, with rapid nucleotide exchange. Plays a role in 16S rRNA processing and 30S ribosomal subunit biogenesis and possibly also in cell cycle regulation and energy metabolism. The polypeptide is GTPase Era (Xanthomonas campestris pv. campestris (strain 8004)).